The primary structure comprises 440 residues: C4-dicarboxylate transport protein (440 aa).

9 consecutive transmembrane segments (helical) span residues 15–35, 46–66, 78–98, 146–166, 190–210, 224–244, 291–311, 332–352, and 354–374; these read VLVAITIGILLGHYYPETGVA, LIKMVIAPIIFCTVVSGIAGM, YALLYFEIVSTIALIIGLVVV, AFANGDILQVLMFSVLFGFAL, IINMIMKLAPIGAFGAMAFTI, LMACFYITCILFVLVVLGGIC, VVGLVIPTGYSFNLDGTSIYL, ITLLLVLLVASKGAAGVTGSG, and IVLAATLSAVGHLPVAGLALI. Positions 419 to 440 are disordered; sequence GGSPLVDTRPTDDLGVAEGPAR.

This sequence belongs to the dicarboxylate/amino acid:cation symporter (DAACS) (TC 2.A.23) family.

The protein localises to the cell inner membrane. Its function is as follows. Responsible for the transport of dicarboxylates such as succinate, fumarate, and malate from the periplasm across the membrane. This is C4-dicarboxylate transport protein from Pseudomonas entomophila (strain L48).